A 308-amino-acid chain; its full sequence is Cis-prenyltransferase 4, chloroplastic (308 aa).

Residues 1–45 (MAFSLQLQQIFVSYTRFCSQPKSITNPLISLKLPSIHPLAFAQNA) constitute a chloroplast transit peptide. Asp84 is a catalytic residue.

Belongs to the UPP synthase family. Mg(2+) is required as a cofactor. Widely expressed.

It is found in the plastid. It localises to the chloroplast. Functionally, uses neryl diphosphate and geranyl diphosphate to catalyze the cis-prenyl chain elongation and produce polyprenyl diphosphate with a chain of 55 carbons. This is Cis-prenyltransferase 4, chloroplastic from Solanum lycopersicum (Tomato).